Reading from the N-terminus, the 219-residue chain is Ribose-5-phosphate isomerase A (219 aa).

Residues 28 to 31 (SGST), 81 to 84 (DGAD), and 94 to 97 (KGGG) contribute to the substrate site. The active-site Proton acceptor is the Glu103. Lys121 serves as a coordination point for substrate.

This sequence belongs to the ribose 5-phosphate isomerase family. In terms of assembly, homodimer.

It catalyses the reaction aldehydo-D-ribose 5-phosphate = D-ribulose 5-phosphate. Its pathway is carbohydrate degradation; pentose phosphate pathway; D-ribose 5-phosphate from D-ribulose 5-phosphate (non-oxidative stage): step 1/1. Its function is as follows. Catalyzes the reversible conversion of ribose-5-phosphate to ribulose 5-phosphate. The polypeptide is Ribose-5-phosphate isomerase A (Haemophilus influenzae (strain PittEE)).